A 380-amino-acid chain; its full sequence is MQAKFFTFVILSSVFYFNYPLAEARSIQARLANKPKGTIKTIKGDDGEVVDCVDIYKQPAFDHPLLKNHTLQMQPSSYASKVGEYNKLEQPWHKNGECPKGSIPIRRQVITGLPVVKKQFPNLKFAPPSANTNHQYAVIAYFYGNASLQGANATINIWEPNLKNPNGDFSLTQIWISAGSGSSLNTIEAGWQVYPGRTGDSQPRFFIYWTADGYTSTGCYDLTCPGFVQTNNYYAIGMALQPSVYGGQQYELNESIQRDPATGNWWLYLWGTVVGYWPASIYNSITNGADTVEWGGEIYDSSGTGGFHTTTQMGSGHFPTEGYGKASYVRDLQCVDTYGNVISPTANSFQGIAPAPNCYNYQFQQGSSELYLFYGGPGCQ.

Positions 1–24 (MQAKFFTFVILSSVFYFNYPLAEA) are cleaved as a signal peptide. The propeptide at 25-128 (RSIQARLANK…QFPNLKFAPP (104 aa)) is activation peptide. Cys-52 and Cys-98 form a disulfide bridge. Asn-68, Asn-145, and Asn-152 each carry an N-linked (GlcNAc...) asparagine glycan. Positions 129-380 (SANTNHQYAV…YLFYGGPGCQ (252 aa)) constitute a Neprosin PEP catalytic domain. The active site involves Glu-188. Cys-219 and Cys-224 are joined by a disulfide. N-linked (GlcNAc...) asparagine glycosylation occurs at Asn-253. The active site involves Glu-297. A disulfide bridge links Cys-358 with Cys-379.

This sequence belongs to the peptidase G3 family.

It localises to the secreted. It catalyses the reaction Hydrolysis of Pro-|-Xaa &gt;&gt; Ala-|-Xaa in oligopeptides.. Weakly inhibited by the aspartic protease inhibitor pepstatin. Weakly inhibited by pepstatin A (IC(50) of 140 uM) and 1,2-epoxy-3-(p-nitrophenoxy)propane (EPNP) (IC(50) of 480 uM). Activity is not affected by the POP inhibitor Z-Pro-prolinal inhibitor or the denaturant urea. In terms of biological role, glutamic endopeptidase that preferentially cleaves peptide bonds on the C-terminal side of proline residues. Also cleaves peptide bonds on the C-terminal side of alanine residues but with less efficiency. In contrast to most proline-cleaving enzymes, effectively degrades proteins of any size. Found in the viscoelastic fluid of the pitcher, and so likely functions in the digestion of their prey. This Nepenthes x ventrata (Red tropical pitcher plant) protein is Protein neprosin.